The following is a 2090-amino-acid chain: Ninein (2090 aa).

EF-hand domains are found at residues 8–43 (QHEA…LSLE) and 42–77 (LEEV…ILSR). Residue Ser152 is modified to Phosphoserine. EF-hand domains lie at 182 to 217 (WIEE…YGLQ) and 219 to 252 (VDGE…NGKS). Position 245 to 252 (245 to 252 (GLFKNGKS)) interacts with GTP. At Ser269 the chain carries Phosphoserine. GTP is bound at residue 300–304 (DGMGH). Positions 317-352 (EGIENSQEILKALDFSLDGNINLTELTLALENELLV) constitute an EF-hand 5 domain. The stretch at 357–570 (IHQAALASFK…YRAQGRVLRL (214 aa)) forms a coiled coil. A GTP-binding site is contributed by 420–423 (RKLD). Residues 574-595 (NSPSEEVEANSGGIEPEHGLGS) form a disordered region. Coiled-coil stretches lie at residues 625–1027 (LRLE…QATS), 1068–1099 (LSLQ…QKLE), 1181–1341 (SELE…SVVQ), and 1441–1816 (QDKH…AGGK). Positions 802–1505 (KMETECNRRT…HDLQITCSEM (704 aa)) are important for interaction with CEP170. Residues 1152 to 1190 (VRDLGSTGTSSVQRQEVKIEESEASVEGFSELENSEETR) are disordered. 2 positions are modified to phosphoserine: Ser1550 and Ser1837. Coiled-coil stretches lie at residues 1854–1885 (QENE…SNLL) and 1922–2067 (ANRK…QVSL).

In terms of assembly, homooligomer. Interacts with GSK3B/GSK3-beta via its C-terminal domain. Interacts with C14ORF166, such interaction may prevent its phosphorylation by GSK3B. Interacts with AUNIP (via N-terminus). Identified in a complex with AUNIP and AURKA. Interacts with CCDC120. Interacts (via C-terminus) with CEP250. Interacts with CEP170. Interacts with the gamma-tubulin ring complex component TUBGCP3. Interacts with gamma-tubulin. Isoform 6 does not interact with CEP170 or CEP250. Phosphorylated by AURKA/Aurora kinase A and PKA kinases but not CK2 or AURKB/ Aurora kinase B. Ubiquitous. Highly expressed in heart and skeletal muscle. Isoform 1 is more expressed than isoform 5.

The protein localises to the cytoplasm. The protein resides in the cytoskeleton. Its subcellular location is the microtubule organizing center. It localises to the centrosome. It is found in the centriole. Centrosomal protein required in the positioning and anchorage of the microtubule minus-end in epithelial cells. May also act as a centrosome maturation factor. May play a role in microtubule nucleation, by recruiting the gamma-tubulin ring complex to the centrosome. Overexpression does not perturb nucleation or elongation of microtubules but suppresses release of microtubules. Required for centriole organization and microtubule anchoring at the mother centriole. In Homo sapiens (Human), this protein is Ninein (NIN).